Reading from the N-terminus, the 89-residue chain is Cell division topological specificity factor (89 aa).

Belongs to the MinE family.

In terms of biological role, prevents the cell division inhibition by proteins MinC and MinD at internal division sites while permitting inhibition at polar sites. This ensures cell division at the proper site by restricting the formation of a division septum at the midpoint of the long axis of the cell. This chain is Cell division topological specificity factor, found in Sodalis glossinidius (strain morsitans).